We begin with the raw amino-acid sequence, 240 residues long: Sugar fermentation stimulation protein homolog (240 aa).

The protein belongs to the SfsA family.

The protein is Sugar fermentation stimulation protein homolog of Crocosphaera subtropica (strain ATCC 51142 / BH68) (Cyanothece sp. (strain ATCC 51142)).